A 226-amino-acid chain; its full sequence is Ribonuclease 3 (226 aa).

Positions Lys7–Gly134 constitute an RNase III domain. Glu47 serves as a coordination point for Mg(2+). Asp51 is an active-site residue. Mg(2+) contacts are provided by Asp120 and Glu123. The active site involves Glu123. In terms of domain architecture, DRBM spans Asp160 to Lys226. Positions Lys201–Lys226 are disordered. A compositionally biased stretch (low complexity) spans Glu214–Lys226.

The protein belongs to the ribonuclease III family. In terms of assembly, homodimer. Mg(2+) serves as cofactor.

The protein resides in the cytoplasm. It catalyses the reaction Endonucleolytic cleavage to 5'-phosphomonoester.. In terms of biological role, digests double-stranded RNA. Involved in the processing of primary rRNA transcript to yield the immediate precursors to the large and small rRNAs (23S and 16S). Processes some mRNAs, and tRNAs when they are encoded in the rRNA operon. Processes pre-crRNA and tracrRNA of type II CRISPR loci if present in the organism. The protein is Ribonuclease 3 of Lactobacillus johnsonii (strain CNCM I-12250 / La1 / NCC 533).